The sequence spans 125 residues: Multifunctional methyltransferase subunit TRM112-like protein (125 aa).

A TRM112 domain is found at 2–119 (RLLTHNLLSS…SRGIPNMLLS (118 aa)). At S119 the chain carries Phosphoserine.

Belongs to the TRM112 family. Part of the heterodimeric BUD23-TRM112 methyltransferase complex; this heterodimerization is necessary for the metabolic stability and activity of the catalytic subunit BUD23. Part of the heterodimeric N6AMT1-TRM112 methyltransferase complex; this heterodimerization is necessary for S-adenosyl-L-methionine-binding to N6AMT1/HEMK2. Part of the heterodimeric ALKBH8-TRM112 methyltransferase complex. Part of the heterodimeric METTL5-TRM112 methyltransferase complex; this heterodimerization is necessary for the stability of the catalytic subunit METTL5. Part of the heterodimeric THUMPD3-TRM112 methyltransferase complex; this complex forms an active tRNA methyltransferase, where TRMT112 acts as an activator of the catalytic subunit THUMPD3. Part of the heterodimeric THUMPD2-TRM112 methyltransferase complex; this complex forms an active tRNA methyltransferase, where TRMT112 acts as an activator of the catalytic subunit THUMPD2. Part of the heterodimeric TRMT11-TRM112 methyltransferase complex; this complex forms an active tRNA methyltransferase, where TRMT112 acts as an activator of the catalytic subunit TRMT11.

The protein localises to the nucleus. Its subcellular location is the nucleoplasm. The protein resides in the cytoplasm. It localises to the perinuclear region. Acts as an activator of both rRNA/tRNA and protein methyltransferases. Together with methyltransferase BUD23, methylates the N(7) position of a guanine in 18S rRNA. The heterodimer with HEMK2/N6AMT1 catalyzes N5-methylation of ETF1 on 'Gln-185', using S-adenosyl L-methionine as methyl donor. The heterodimer with ALKBH8 catalyzes the methylation of 5-carboxymethyl uridine to 5-methylcarboxymethyl uridine at the wobble position of the anticodon loop in target tRNA species. Together with methyltransferase THUMPD3, catalyzes the formation of N(2)-methylguanosine at position 6 in a broad range of tRNA substrates and at position 7 of tRNA(Trp). Involved in the pre-rRNA processing steps leading to small-subunit rRNA production. Together with methyltransferase METTL5, specifically methylates the 6th position of adenine in position 1832 of 18S rRNA. The chain is Multifunctional methyltransferase subunit TRM112-like protein (TRMT112) from Bos taurus (Bovine).